The following is a 591-amino-acid chain: V-type ATP synthase alpha chain (591 aa).

Residue 233–240 (GPFGAGKT) coordinates ATP.

Belongs to the ATPase alpha/beta chains family.

It catalyses the reaction ATP + H2O + 4 H(+)(in) = ADP + phosphate + 5 H(+)(out). Functionally, produces ATP from ADP in the presence of a proton gradient across the membrane. The V-type alpha chain is a catalytic subunit. This is V-type ATP synthase alpha chain from Streptococcus pyogenes serotype M3 (strain ATCC BAA-595 / MGAS315).